The primary structure comprises 118 residues: Ribonuclease P protein component (118 aa).

The protein belongs to the RnpA family. In terms of assembly, consists of a catalytic RNA component (M1 or rnpB) and a protein subunit.

The catalysed reaction is Endonucleolytic cleavage of RNA, removing 5'-extranucleotides from tRNA precursor.. In terms of biological role, RNaseP catalyzes the removal of the 5'-leader sequence from pre-tRNA to produce the mature 5'-terminus. It can also cleave other RNA substrates such as 4.5S RNA. The protein component plays an auxiliary but essential role in vivo by binding to the 5'-leader sequence and broadening the substrate specificity of the ribozyme. The chain is Ribonuclease P protein component from Rickettsia peacockii (strain Rustic).